The primary structure comprises 31 residues: Photosystem II reaction center protein T (31 aa).

The helical transmembrane segment at 3 to 23 (ALVYVFLLTGTLMVIFFAIFF) threads the bilayer.

Belongs to the PsbT family. PSII is composed of 1 copy each of membrane proteins PsbA, PsbB, PsbC, PsbD, PsbE, PsbF, PsbH, PsbI, PsbJ, PsbK, PsbL, PsbM, PsbT, PsbX, PsbY, PsbZ, Psb30/Ycf12, at least 3 peripheral proteins of the oxygen-evolving complex and a large number of cofactors. It forms dimeric complexes.

Its subcellular location is the plastid. It localises to the chloroplast thylakoid membrane. Functionally, found at the monomer-monomer interface of the photosystem II (PS II) dimer, plays a role in assembly and dimerization of PSII. PSII is a light-driven water plastoquinone oxidoreductase, using light energy to abstract electrons from H(2)O, generating a proton gradient subsequently used for ATP formation. The sequence is that of Photosystem II reaction center protein T from Pyropia yezoensis (Susabi-nori).